The following is a 101-amino-acid chain: MSSTLIVQLDMRTLCQEADVTAECVIEIVEHGIVEPSGRTPEDWLFDDQAPLVTKRAVKLHQELELEWEGVALALELLQEVQQLRSENNMLKQRLGRFIQM.

This sequence belongs to the CbpM family.

Functionally, interacts with CbpA and inhibits both the DnaJ-like co-chaperone activity and the DNA binding activity of CbpA. Together with CbpA, modulates the activity of the DnaK chaperone system. Does not inhibit the co-chaperone activity of DnaJ. The chain is Chaperone modulatory protein CbpM from Pseudomonas putida (strain ATCC 700007 / DSM 6899 / JCM 31910 / BCRC 17059 / LMG 24140 / F1).